A 242-amino-acid chain; its full sequence is Probable septum site-determining protein MinC (242 aa).

It belongs to the MinC family. Interacts with MinD and FtsZ.

In terms of biological role, cell division inhibitor that blocks the formation of polar Z ring septums. Rapidly oscillates between the poles of the cell to destabilize FtsZ filaments that have formed before they mature into polar Z rings. Prevents FtsZ polymerization. The chain is Probable septum site-determining protein MinC from Thioalkalivibrio sulfidiphilus (strain HL-EbGR7).